A 319-amino-acid chain; its full sequence is Acetyl-coenzyme A carboxylase carboxyl transferase subunit alpha (319 aa).

Residues 35–296 enclose the CoA carboxyltransferase C-terminal domain; that stretch reads NIDEEVHRLR…KAQLLADLAD (262 aa).

This sequence belongs to the AccA family. As to quaternary structure, acetyl-CoA carboxylase is a heterohexamer composed of biotin carboxyl carrier protein (AccB), biotin carboxylase (AccC) and two subunits each of ACCase subunit alpha (AccA) and ACCase subunit beta (AccD).

The protein resides in the cytoplasm. The enzyme catalyses N(6)-carboxybiotinyl-L-lysyl-[protein] + acetyl-CoA = N(6)-biotinyl-L-lysyl-[protein] + malonyl-CoA. The protein operates within lipid metabolism; malonyl-CoA biosynthesis; malonyl-CoA from acetyl-CoA: step 1/1. In terms of biological role, component of the acetyl coenzyme A carboxylase (ACC) complex. First, biotin carboxylase catalyzes the carboxylation of biotin on its carrier protein (BCCP) and then the CO(2) group is transferred by the carboxyltransferase to acetyl-CoA to form malonyl-CoA. This Escherichia coli O127:H6 (strain E2348/69 / EPEC) protein is Acetyl-coenzyme A carboxylase carboxyl transferase subunit alpha.